We begin with the raw amino-acid sequence, 493 residues long: Glycerol kinase 2 (493 aa).

Residue Ser-12 coordinates ADP. Residues Ser-12 and Thr-13 each coordinate ATP. Ser-12 is a binding site for sn-glycerol 3-phosphate. Lys-16 is an ADP binding site. Sn-glycerol 3-phosphate contacts are provided by Arg-82, Glu-83, Tyr-134, and Asp-243. Glycerol is bound by residues Arg-82, Glu-83, Tyr-134, Asp-243, and Gln-244. 2 residues coordinate ADP: Thr-265 and Gly-308. Residues Thr-265, Gly-308, and Asn-312 each coordinate ATP. Asn-413 is an ADP binding site.

It belongs to the FGGY kinase family. Homotetramer and homodimer (in equilibrium).

It carries out the reaction glycerol + ATP = sn-glycerol 3-phosphate + ADP + H(+). The protein operates within polyol metabolism; glycerol degradation via glycerol kinase pathway; sn-glycerol 3-phosphate from glycerol: step 1/1. Activated by phosphorylation and inhibited by fructose 1,6-bisphosphate (FBP). Functionally, key enzyme in the regulation of glycerol uptake and metabolism. Catalyzes the phosphorylation of glycerol to yield sn-glycerol 3-phosphate. This Clostridium tetani (strain Massachusetts / E88) protein is Glycerol kinase 2.